A 333-amino-acid polypeptide reads, in one-letter code: (2R)-3-sulfolactate dehydrogenase (NADP(+)) (333 aa).

This sequence belongs to the LDH2/MDH2 oxidoreductase family.

It carries out the reaction (2R)-3-sulfolactate + NADP(+) = 3-sulfopyruvate + NADPH + H(+). Catalyzes the reduction of sulfopyruvate to (R)-sulfolactate. Together with SlcC, provides a racemase system that converts (2S)-3-sulfolactate to (2R)-3-sulfolactate, which is degraded further by (2R)-sulfolactate sulfo-lyase. The chain is (2R)-3-sulfolactate dehydrogenase (NADP(+)) (comC) from Chromohalobacter salexigens (strain ATCC BAA-138 / DSM 3043 / CIP 106854 / NCIMB 13768 / 1H11).